Consider the following 500-residue polypeptide: NAD(P)H-quinone oxidoreductase chain 4, chloroplastic (500 aa).

Transmembrane regions (helical) follow at residues 4–24 (LPWLTIIVILPISAGSSIPLF), 31–51 (IIRWYTLGICLLEFLLMTYTF), 87–107 (IGPISLTSFVTTLATLAAWPV), 111–131 (PRLFYFLMLAMYSGQVGLFAS), 134–154 (ILLFFLMWELELIPVYLLISM), 167–187 (FILYTAGGSIFISMGASSMGL), 207–227 (VVLEIVFYLGFFIAHAIKLPI), 242–262 (HYSTCMLLAGIPLKMGGYGLI), 274–294 (SLFSPWLVIVGAVQIIYAALT), 305–325 (IAYSSVSHMGFVIVGIGSMAD), 330–350 (GAILQMISHGLIGAALFFLAG), 358–378 (TLFLDGIGGMAIPMSKISTMF), 386–406 (LALPGMSGFVAESMVLLGIIT), 416–436 (IVIAAIMAIGMILTPIHLLSM), and 462–482 (IFISICLFLPVIGTGTYPDLV).

This sequence belongs to the complex I subunit 4 family.

Its subcellular location is the plastid. It is found in the chloroplast thylakoid membrane. It catalyses the reaction a plastoquinone + NADH + (n+1) H(+)(in) = a plastoquinol + NAD(+) + n H(+)(out). The enzyme catalyses a plastoquinone + NADPH + (n+1) H(+)(in) = a plastoquinol + NADP(+) + n H(+)(out). In Cycas taitungensis (Prince sago), this protein is NAD(P)H-quinone oxidoreductase chain 4, chloroplastic.